We begin with the raw amino-acid sequence, 2042 residues long: MAEDTEYKKLPVEERCVHKLWKARVDGYEEAAKIFRELDDEKSPEWSKFAGLIKKMVVDSNALAQEKGLEAALIFVENSGLAGRTVGDVMTGIVQKCIAAPKTKTKELSVQVALMYVEIEKQEAVVEELVKGMEAKNPKIVSACVAATTLALREFGHKVIGVKPLIKKLAPLMSDRDKTVRDEGKQLAVEIYRWIGAAMKAQISTLPQVTLKELEDEFDKLKGERVEPSRYLKSQQEKQAKIADAAATEDAYNEDDGEAGVEEIDPMDLLDPVDILSKMPKDFYDKLEEKKWTLRKESLEVLEKLLTDHPKLENGEYGALVSALKKVITKDSNVVLVAMAGKCLALLAKGLAKRFSNYASACVPSLLEKFKEKKPNVVTALREAIDAIYASTSLEAQQESIVESLSNKNPSVKSETALFIARALTRTQPTALNKKLLKLLTTSLVKTLNEPDPTVRDSSAEALGTLIKLMGDKAVTPLLADVDPLKMAKIKECQEKAEIKIKVAGPKKETRPASAPTAKAAAPAKTVAGSVDPKPVTRPATTGARKVLKKPATVSGGGATSAPTAALKAGGKPLATEREITPEELQEKSEEILPAEILNGLVDSNWKNRLAAVEQLLGEISGFDAKQAGISQILIRTISGRKPGLKEMNFQVLKFKLDIIRSVAENYPLTTTTVDLVINEIIEKLADAKNGAAAADVLSAFAEATKLEYVVGKVLSFAFEQKSPKVQSEAFNWVNRSIIEFGFQLQPKTLIEDVRKGVQSTNPTVRASAIQMVGTMSMYMGKALMMFFDSEKPALKSQIQVEFDKNVGEKPPKPVRGVQRSSGGTAGNSPDNEDDDGGAAGEEEPINMADLLPRVDIAPQITEALLKEMSDKDWKTRNEGLTKLQAIISEARLIKPSIGDLAPALAHRLVDSNAKIAQTTLAICEQLATAMGAGCRNHVRNLFPGFLHALGDNKSFVRAAALNCINSFGEKGGYKEFFESEMIADALKGGSPALKTELWAWLADKLPGLPPKSVSKEDIHSMVPHLYAHICDRNADVRKNANEAVLGIMIHLGFDAMNRALDKQKPASKKDILAALEKARPNLPVKPLPKGKHQAPIPEEPKLKTVRGGGAGGAPGIQKSATARVAGGQDKQVPARKKDEDIDTSPLLCANSAKNQRLLDEQKMKVLKWTFVTPREEFTELLRDQMMTANVNKALIANMFHDDFRYHLKVIEQLSEDLAGNSKALVCNLDLILKWLTLRFYDTNPSVLIKGLEYLVQVFQVLIDEEYILAENEGSSFVPHLLLKIGDPKDAVRNGVRRVLRQVILVFPFVKVFGYVMEGLKSKNARQRTECLDELTFLIESYGMNICPQSAVREIARQISDRDNSVRNAALNCIVQVFFLSGEKTYKMIGHLNEKDLSMLDERIKRAKKTKKPTPPPSVDVPAPQRHDSIEIEDAEVGNGCDELPPPDEDGTFDQAPSSQLLLLQQQLQQLQQQAQQQKPSGPFGLDSQVISEIEKDWVRVDQMEQKPLLNVDISSLDEPIKVRPTRAGIHYPQEKFDRLISRQHYMQQTLTTSPSSTAGMTSGVSPYRSPMRLQHQQPQQQLENNIPNLADVLPKHDPQLVKVIKGVSSTDTLKARAAINELAAIIEAPEKQAVLRDYEEIFIQNVLAQFKNLSQIPSAQSVVVYQPLLSILYTFFHANILGKTLSVACIKNLMSALLNLMADPKLAVGDDSQYNKVINGICLKVLDKVDFTNLNCALIRLLRETCPEAKLPKFTDLLMKCIWRNVKMLPERSNELNYDAVILEVHEFMLALPSTWWQNRPSDTPMRTIKTILHNMAKVKGNAILQHLNQIPTHSELHTYLIRILKNFQKDGSASGIGASPQRAKEIASKRISHQTHDTVSQIFKLISDRDTKQQGLQKLYDFKQQNPDIDLSTFLQGSSAPFHKYIEEGLAEIERNQNAGSTQDNRTDVNYQNNGPDPDFWMDRLQYHMTGGAAKLASARSADDGSHMLDNKVVDENLCLNGMNAQKASLIKREKRDMSPNRLQHLQAKLAQIKKENHAQ.

TOG regions lie at residues 1–229 and 267–505; these read MAED…VEPS and MDLL…KVAG. The binds tubulin stretch occupies residues 1–505; that stretch reads MAEDTEYKKL…KAEIKIKVAG (505 aa). Promotes microtubule polymerization regions lie at residues 1–516 and 581–1080; these read MAED…ASAP and TPEE…EKAR. HEAT repeat units lie at residues 120 to 157, 160 to 197, 270 to 311, 315 to 353, 357 to 394, 396 to 433, and 440 to 478; these read EKQE…EFGH, IGVK…WIGA, LDPV…DHPK, GEYG…GLAK, NYAS…STSL, AQQE…TALN, and LTTS…VTPL. The interval 498 to 821 is association with microtubule lattice; that stretch reads EIKIKVAGPK…PKPVRGVQRS (324 aa). Positions 506-572 are disordered; it reads PKKETRPASA…PTAALKAGGK (67 aa). Low complexity predominate over residues 513–531; it reads ASAPTAKAAAPAKTVAGSV. The tract at residues 581–814 is TOG 3; that stretch reads TPEELQEKSE…KNVGEKPPKP (234 aa). 4 HEAT repeats span residues 587 to 624, 625 to 662, 672 to 710, and 745 to 782; these read EKSE…SGFD, AKQA…IIRS, TTVD…LEYV, and LQPK…YMGK. The segment at 804–849 is disordered; that stretch reads DKNVGEKPPKPVRGVQRSSGGTAGNSPDNEDDDGGAAGEEEPINMA. The segment covering 819–830 has biased composition (polar residues); sequence QRSSGGTAGNSP. Acidic residues predominate over residues 831 to 845; it reads DNEDDDGGAAGEEEP. TOG regions lie at residues 849–1087 and 1179–1415; these read ADLL…PVKP and TELL…KPTP. 4 HEAT repeats span residues 856 to 893, 896 to 933, 937 to 974, and 1017 to 1054; these read DIAP…EARL, PSIG…AMGA, NHVR…KGGY, and EDIH…HLGF. The segment at 1083–1140 is disordered; it reads LPVKPLPKGKHQAPIPEEPKLKTVRGGGAGGAPGIQKSATARVAGGQDKQVPARKKDE. The segment at 1099-1428 is association with microtubule lattice; it reads EEPKLKTVRG…VDVPAPQRHD (330 aa). HEAT repeat units lie at residues 1205 to 1242, 1272 to 1309, 1311 to 1344, and 1346 to 1383; these read RYHL…RFYD, NEGS…VFPF, KVFG…SYGM, and ICPQ…LSGE. Disordered regions lie at residues 1407 to 1455 and 1940 to 1959; these read AKKT…TFDQ and NAGS…NGPD. A compositionally biased stretch (polar residues) spans 1940 to 1957; that stretch reads NAGSTQDNRTDVNYQNNG.

It belongs to the TOG/XMAP215 family. In terms of assembly, interacts with tacc, dgt6. Interacts with mv. Interacts with Patronin.

It localises to the cytoplasm. Its subcellular location is the cytoskeleton. The protein localises to the microtubule organizing center. The protein resides in the centrosome. It is found in the spindle. It localises to the perinuclear region. Its function is as follows. Binds to the plus end of microtubules and regulates microtubule dynamics and microtubule organization. Function in neurons is essential for adult survival, and is important for climbing behavior and activity. Promotes cytoplasmic microtubule nucleation and elongation. May act as a microtubule antipause factor that rapidly catalyzes the transition from pause to either growth or shrinkage. Involved in mitotic spindle elongation. Involved in the establishment of cell polarity and mitotic spindle orientation in neuroblasts. Required for maintaining the bipolarity of acentrosomal meiotic spindles; the function is dependent on tacc and involves ncd. Involved in oocyte microtubule cytoskeleton organization and bicoid mRNA localization. Seems to be involved in elongation of kinetochore-derived microtubule fibers. In fat body cells, essential component of perinuclear non-centrosomal microtubule-organizing centers (ncMTOCs) which function to accommodate the organization of microtubule (MT) networks to control nuclear positioning and dynein motor-based retrograde endosomal trafficking. Within the ncMTOCs, Msp300 and shot anchors the ncMTOC at the nuclear surface and recruits the MT minus-end regulators Patronin and Nin for assembly, anchoring and/or stabilization of circumferential and radial MTs at the ncMTOCs. Patronin, and perhaps Nin, then recruits msps to the ncMTOC where it is required for the gamma-tubulin-independent elongation and assembly of radial MTs. The protein is Protein mini spindles (msps) of Drosophila melanogaster (Fruit fly).